Here is a 397-residue protein sequence, read N- to C-terminus: 4-hydroxyphenylpyruvate dioxygenase (397 aa).

VOC domains are found at residues 18–149 (NFHH…FVEY) and 181–339 (FIDH…IFTK). 3 residues coordinate Fe cation: His184, His267, and Glu350.

The protein belongs to the 4HPPD family. In terms of assembly, homodimer. It depends on Fe cation as a cofactor.

The protein resides in the cytoplasm. Its subcellular location is the endoplasmic reticulum membrane. It is found in the golgi apparatus membrane. The enzyme catalyses 3-(4-hydroxyphenyl)pyruvate + O2 = homogentisate + CO2. It functions in the pathway amino-acid degradation; L-phenylalanine degradation; acetoacetate and fumarate from L-phenylalanine: step 3/6. Functionally, catalyzes the conversion of 4-hydroxyphenylpyruvic acid to homogentisic acid, one of the steps in tyrosine catabolism. The chain is 4-hydroxyphenylpyruvate dioxygenase (hpd) from Danio rerio (Zebrafish).